The sequence spans 872 residues: Facilitated trehalose transporter Tret1 (872 aa).

Disordered stretches follow at residues 1 to 40 (MSGR…LKEK), 53 to 217 (VESN…KATS), 262 to 281 (SSSE…RKHQ), and 293 to 315 (KVLQ…KRLI). At 1–406 (MSGRDNRGAG…VYRPTTNPIY (406 aa)) the chain is on the cytoplasmic side. Residues 8 to 22 (GAGGGGGGGGGGSGG) are compositionally biased toward gly residues. 3 stretches are compositionally biased toward low complexity: residues 55-68 (SNLS…SLDT), 84-98 (RHPQ…QQQR), and 121-132 (PPTQQQPQQQHQ). Phosphoserine occurs at positions 262, 263, and 264. 2 positions are modified to phosphoserine: S334 and S336. A disordered region spans residues 340–361 (FLTSRQHFQQQRSISTDSRKSR). Over residues 344-355 (RQHFQQQRSIST) the composition is skewed to polar residues. The chain crosses the membrane as a helical span at residues 407–427 (IWTQVLAALSVSLGSLVVGFV). At 428–454 (SAYTSPALITMTNGNITSFEVTPQAAS) the chain is on the extracellular side. N-linked (GlcNAc...) asparagine glycosylation occurs at N442. A helical membrane pass occupies residues 455–475 (WVGGIMPLAGLLGGIAGGPFI). Residues 476 to 488 (EYLGRRNTILTTA) are Cytoplasmic-facing. A helical transmembrane segment spans residues 489-509 (VPFIVSSLLIACAVNITMVLL). Residues 510-511 (GR) lie on the Extracellular side of the membrane. A helical transmembrane segment spans residues 512–532 (FLAGFCVGIASLSLPVYLGET). Residues 533–538 (VQPEVR) are Cytoplasmic-facing. A helical membrane pass occupies residues 539-559 (GTLGLLPTAFGNIGILLCFVA). Residues 560 to 566 (GTYMDWS) are Extracellular-facing. The helical transmembrane segment at 567–587 (MLAFLGAALPVPFLILMFLIP) threads the bilayer. The Cytoplasmic segment spans residues 588 to 650 (ETPRWYVSRG…ELLKRNNLKP (63 aa)). The chain crosses the membrane as a helical span at residues 651-671 (LSISLGLMFFQQLSGINAVIF). Over 672–687 (YTVQIFKDAGSTIDGN) the chain is Extracellular. A helical membrane pass occupies residues 688-708 (VCTIIVGIVNFMATFIGIILI). The Cytoplasmic segment spans residues 709–714 (DRAGRK). A helical membrane pass occupies residues 715–735 (ILLYVSNVAMIITLFVLGGFF). At 736–755 (YCKDKAGIDVSNVGWLPLSC) the chain is on the extracellular side. The chain crosses the membrane as a helical span at residues 756-776 (FVVYILGFSLGFGPIPWLMMG). Residues 777 to 784 (EILPAKIR) are Cytoplasmic-facing. Residues 785 to 803 (GSAASVATAFNWTCTFVVT) traverse the membrane as a helical segment. Topologically, residues 804-816 (KTFQDMLDVIGSY) are extracellular. Residues 817–837 (GAFWLFGAICFIGLFFVIIYV) traverse the membrane as a helical segment. At 838–872 (PETQGKTLEDIERKMMGRVRRMSSVANIKPLSFNM) the chain is on the cytoplasmic side. A phosphoserine mark is found at S860 and S861.

The protein belongs to the major facilitator superfamily. Sugar transporter (TC 2.A.1.1) family. Trehalose transporter subfamily.

The protein resides in the cell membrane. Low-capacity facilitative transporter for trehalose. Does not transport maltose, sucrose or lactose. Mediates the bidirectional transfer of trehalose. Responsible for the transport of trehalose synthesized in the fat body and the incorporation of trehalose into other tissues that require a carbon source, thereby regulating trehalose levels in the hemolymph. The protein is Facilitated trehalose transporter Tret1 of Drosophila willistoni (Fruit fly).